The sequence spans 299 residues: uncharacterized protein (299 aa).

The helical transmembrane segment at 4–20 (LFFIFVMLIVLLCGCTS) threads the bilayer.

It is found in the membrane. This is an uncharacterized protein from Methanocaldococcus jannaschii (strain ATCC 43067 / DSM 2661 / JAL-1 / JCM 10045 / NBRC 100440) (Methanococcus jannaschii).